A 354-amino-acid polypeptide reads, in one-letter code: Nucleoporin seh1 (354 aa).

WD repeat units lie at residues 10-49, 55-96, 112-153, 161-209, 216-259, and 270-309; these read DHKDVIHDVVFDYYGRRMATCSSDQTVKIWDEDGQGKWNV, AHSG…KVSS, DSRT…NLSQ, SNKL…RKCV, DITD…TDIS, and EHNCPVWRVCWNMLATMLISTGDDGCVRLWRMNYNRQWRC.

Belongs to the WD repeat SEC13 family. Probable component of the nuclear pore complex (NPC). Component of the GATOR complex consisting of mio, Nup44A/Seh1, Im11, Nplr3, Nplr2, Wdr24, Wdr59 and Sec13. Within the GATOR complex, probable component of the GATOR2 subcomplex which is likely composed of mio, Nup44A/Seh1, Wdr24, Wdr59 and Sec13. Interacts with mio. Interacts with Wdr24. The GATOR2 complex associates with unmet in the absence of S-adenosyl-L-methionine; the mio-Wdr24-Nup44A subcomplex is essential and sufficient for this interaction while Wdr59 and Sec13 are dispensable. This association acts as a nutrient sensor to inhibit mTORC1 signaling in the absence of methionine. In terms of tissue distribution, expressed in ovarian cysts.

The protein localises to the nucleus envelope. The protein resides in the lysosome. In terms of biological role, probable component of the nuclear pore complex (NPC). Involved in maintaining the localization of another nucleoporin Mgtor to the nuclear envelope of early meiotic female germline cells. It is not involved in recruiting the nucleoporins Mgtor, Nup107, Nup153 and FG-containing nucleoporins to the NPC. An essential component of the GATOR subcomplex GATOR2 which functions as an activator of the amino acid-sensing branch of the mTORC1 signaling pathway. The two GATOR subcomplexes, GATOR1 and GATOR2, regulate the mTORC1 pathway in order to mediate metabolic homeostasis, female gametogenesis and the response to amino acid limitation and complete starvation. GATOR2 activates the mTORC1 signaling pathway through the inhibition of the GATOR1 subcomplex, controlling the switch to cell proliferation growth under nutrient replete conditions and growth during female oocyte development. This component is required for activating mTORC1 specifically in germline cells to promote cell growth and maintain the oocyte fate, probably influences the organization and/or function of microtubules within ovarian cysts, and promotes accumulation of another GATOR2 complex member mio in germline and somatic tissues. GATOR1 and GATOR2 act at different stages of oogenesis to regulate mTORC1 in order to control meiotic entry and promote oocyte growth and development. After exactly four mitotic cyst divisions, the GATOR1 complex members (Iml1, Nprl2 and Nprl3) down-regulate mTORC1 to slow cellular metabolism and promote the mitotic/meiotic transition. At later stages of oogenesis, the mio and Nup44A components of the GATOR2 complex inhibit GATOR1 and thus activate mTORC1 to promote meiotic progression, and drive oocyte growth and development. In addition to its role in the regulation of the mTORC1 complex, functions independently of mTORC1 to prevent the inappropriate accumulation of autolysosomes in germline tissues. The chain is Nucleoporin seh1 from Drosophila melanogaster (Fruit fly).